The primary structure comprises 309 residues: MRIALAPMEGLVDELLRDLLTRVGGIDWCVTEFVRVCDRLLPVAQFEKLAPELRHGWRTRAGTPMHLQLLGSDPACLAENAALAAELGAPAIDLNFGCPAKTSTARGADGCCSTSRNCCMPSSARCAGPCRRCAGDRQDAPGVRPARGRPGVRRALVEGGVAHLVVHARTKVEGYRPPASWEWLARVREAVAVPVYANRKSGRRRIGCREISGVEDVMLGCGLVSRPDLARQIAMRAPDARSSRRAGVRYSRWCASSGGAPGSGSRRATPLAGSSSGWACWRAVIRRRPRCSPNCAGRTTAGGWMPCWA.

FMN-binding positions include 7 to 9 (PME) and Gln68. Residue Cys98 is the Proton donor of the active site. FMN contacts are provided by residues Arg137, Asn198, and 220-221 (GC).

This sequence belongs to the Dus family. DusC subfamily. FMN serves as cofactor.

The catalysed reaction is 5,6-dihydrouridine(16) in tRNA + NADP(+) = uridine(16) in tRNA + NADPH + H(+). It carries out the reaction 5,6-dihydrouridine(16) in tRNA + NAD(+) = uridine(16) in tRNA + NADH + H(+). Functionally, catalyzes the synthesis of 5,6-dihydrouridine (D), a modified base found in the D-loop of most tRNAs, via the reduction of the C5-C6 double bond in target uridines. Specifically modifies U16 in tRNAs. The polypeptide is tRNA-dihydrouridine(16) synthase (Azotobacter vinelandii).